The chain runs to 91 residues: MSKVCQVTGRKPTRGYKYAIRGIAKKKKGIGLKVTGKTKRRFQPNLFKKRIWFAEENRFITLKLSTAALRTIDRLGVFAVVRKMRANGQSV.

The protein belongs to the bacterial ribosomal protein bL28 family.

The chain is Large ribosomal subunit protein bL28 from Protochlamydia amoebophila (strain UWE25).